The primary structure comprises 135 residues: Protein NrdI (135 aa).

It belongs to the NrdI family.

Probably involved in ribonucleotide reductase function. This Salmonella gallinarum (strain 287/91 / NCTC 13346) protein is Protein NrdI.